A 235-amino-acid polypeptide reads, in one-letter code: Ribosomal RNA small subunit methyltransferase G (235 aa).

S-adenosyl-L-methionine-binding positions include G75, F80, 126–127 (AE), and R145.

It belongs to the methyltransferase superfamily. RNA methyltransferase RsmG family.

Its subcellular location is the cytoplasm. Functionally, specifically methylates the N7 position of a guanine in 16S rRNA. In Carboxydothermus hydrogenoformans (strain ATCC BAA-161 / DSM 6008 / Z-2901), this protein is Ribosomal RNA small subunit methyltransferase G.